The following is a 2495-amino-acid chain: Zinc finger protein 462 (2495 aa).

C2H2-type zinc fingers lie at residues 4–27 (LQCDGCDFRAPSYEDLKAHIQDVH), 108–131 (FQCKFCVRYFRSKNLLIEHTRKVH), and 162–185 (FSCQFCTYKSPRRARIIKHQKMYH). K20 is covalently cross-linked (Glycyl lysine isopeptide (Lys-Gly) (interchain with G-Cter in SUMO1); alternate). Residue K20 forms a Glycyl lysine isopeptide (Lys-Gly) (interchain with G-Cter in SUMO2); alternate linkage. The interaction with PBX1 stretch occupies residues 215-241 (PCKELPAEVVERSILESMVKPLTKSRG). Glycyl lysine isopeptide (Lys-Gly) (interchain with G-Cter in SUMO2) cross-links involve residues K234 and K271. Disordered regions lie at residues 278–301 (QQEGPNVSEAQNDNEPSPTSNSTY), 329–357 (RPNSSSTSKFSSSMSYPQMKPKSPHNSGL), and 370–395 (DMTNSSADLDTNSMLNDSSSDEDLNE). The segment covering 332–343 (SSSTSKFSSSMS) has biased composition (low complexity). Glycyl lysine isopeptide (Lys-Gly) (interchain with G-Cter in SUMO2) cross-links involve residues K337, K348, and K350. A phosphoserine mark is found at S351 and S355. Over residues 370-387 (DMTNSSADLDTNSMLNDS) the composition is skewed to polar residues. A Glycyl lysine isopeptide (Lys-Gly) (interchain with G-Cter in SUMO2) cross-link involves residue K429. C2H2-type zinc fingers lie at residues 440–463 (FQCPFCPFLTMHRRSISRHIENIH) and 471–493 (YKCDECPFTCKSSLKLGAHKQCH). A Glycyl lysine isopeptide (Lys-Gly) (interchain with G-Cter in SUMO2) cross-link involves residue K485. A disordered region spans residues 492–590 (CHTGTSDWDT…PQPPTQAPPL (99 aa)). Positions 493–502 (HTGTSDWDTV) are enriched in polar residues. Over residues 503-515 (NSQSESLSSSLNE) the composition is skewed to low complexity. A compositionally biased stretch (pro residues) spans 542–590 (PPQPPPPLPPPPPPPSQPLPQPPPPPLQSPHQVPPPTQQPQPPTQAPPL). The C2H2-type 6 zinc-finger motif lies at 593–616 (YKCTMCSYSTMTLKGLRVHQQHKH). Residues K624, K650, and K661 each participate in a glycyl lysine isopeptide (Lys-Gly) (interchain with G-Cter in SUMO2) cross-link. Residues 629–654 (PSSLPLENETDSHPSSSNTVKKSQTS) form a disordered region. Residues 641–654 (HPSSSNTVKKSQTS) are compositionally biased toward polar residues. Position 681 is a phosphoserine (S681). Residue K699 forms a Glycyl lysine isopeptide (Lys-Gly) (interchain with G-Cter in SUMO2) linkage. 3 C2H2-type zinc fingers span residues 835 to 858 (YYCKHCDFNNKSARSVSTHYQRMH), 878 to 900 (YRCLECYIDYTNFEDLQQHYGEH), and 917 to 940 (YRCRFCSYTSPNVRSLMPHYQRMH). K978 participates in a covalent cross-link: Glycyl lysine isopeptide (Lys-Gly) (interchain with G-Cter in SUMO2). The tract at residues 980–999 (MATSTPVARGGGLPATFNKN) is disordered. A C2H2-type 10 zinc finger spans residues 1023 to 1046 (YDCDVCSFASPNMHSVLVHYQKKH). S1083 carries the post-translational modification Phosphoserine. K1128 participates in a covalent cross-link: Glycyl lysine isopeptide (Lys-Gly) (interchain with G-Cter in SUMO2). S1159 is modified (phosphoserine). Residues K1196, K1204, K1210, and K1232 each participate in a glycyl lysine isopeptide (Lys-Gly) (interchain with G-Cter in SUMO2) cross-link. 2 C2H2-type zinc fingers span residues 1254-1277 (LKCRQCSYTSPYFYALRKHIKKDH) and 1459-1482 (YQCTVCQSEYNNLHGLLTHYGKKH). K1488 is covalently cross-linked (Glycyl lysine isopeptide (Lys-Gly) (interchain with G-Cter in SUMO2)). The segment at 1504–1527 (YKCRHCPYINTRIHGVLTHYQKRH) adopts a C2H2-type 13 zinc-finger fold. Residues K1560 and K1580 each participate in a glycyl lysine isopeptide (Lys-Gly) (interchain with G-Cter in SUMO2) cross-link. 3 consecutive C2H2-type zinc fingers follow at residues 1566 to 1589 (YRCKLCPYTHGTLEKLKIHYEKYH), 1649 to 1672 (FRCQLCKYFCSTRKGIARHYRIKH), and 1686 to 1709 (FKCALCAYTNPIRKGLAAHYQKRH). Glycyl lysine isopeptide (Lys-Gly) (interchain with G-Cter in SUMO2) cross-links involve residues K1687 and K1769. Residues 1881–1903 (FQCKHCDSKLQSIAELTSHLNIH) form a C2H2-type 17 zinc finger. A Glycyl lysine isopeptide (Lys-Gly) (interchain with G-Cter in SUMO2) cross-link involves residue K1935. The C2H2-type 18; degenerate zinc finger occupies 1957–1981 (YKCKFCVEVHPTLRAICNHLRKHVQ). K1993 is subject to N6-methyllysine. 3 consecutive C2H2-type zinc fingers follow at residues 2014-2037 (YSCQYCSFVSAFRHNLDRHMQTHH), 2043-2066 (FRCKLCSFKSSYNSRLKTHILKAH), and 2072-2095 (YKCSWCSFSTMTISQLKEHSLKVH). K2093 is covalently cross-linked (Glycyl lysine isopeptide (Lys-Gly) (interchain with G-Cter in SUMO2)). Polar residues-rich tracts occupy residues 2112–2121 (SHAHPSSQKA) and 2132–2149 (DSSYSEPPDVQQQLNHYQ). The segment at 2112-2172 (SHAHPSSQKA…VPPSGTAAGT (61 aa)) is disordered. A phosphoserine mark is found at S2161 and S2166. 3 consecutive C2H2-type zinc fingers follow at residues 2180 to 2203 (LHCEFCEFSSGYIQSIRRHYRDKH), 2209 to 2232 (FKCKDCSFYTGFKSAFTMHVEAGH), and 2243 to 2265 (LRCPLCLYHTKYKRNMIDHIVLH). A Glycyl lysine isopeptide (Lys-Gly) (interchain with G-Cter in SUMO2) cross-link involves residue K2282. 2 C2H2-type zinc fingers span residues 2289 to 2311 (FRCDKCTFTCSSDESLQQHIEKH) and 2317 to 2340 (YKCQLCYYETKHTEELDTHLRDEH). Positions 2361-2387 (KEKIESSSSEDEDKDDEMSSKAEDREL) are disordered. The segment covering 2377-2387 (EMSSKAEDREL) has biased composition (basic and acidic residues). Residues 2403-2425 (FPCEFCGRAFSQGSEWERHVLRH) form a C2H2-type 27 zinc finger. K2493 participates in a covalent cross-link: Glycyl lysine isopeptide (Lys-Gly) (interchain with G-Cter in SUMO2).

As to quaternary structure, interacts with PBX1 isoform PBX1b; this interaction prevents PBX1-HOXA9 heterodimer from forming and binding to DNA. Expressed in the cerebral cortex (at protein level). Expressed in embryonic stem cells (at protein level). Expressed in heart, liver, kidney, muscle, and female and male genital tracts (at protein level).

The protein resides in the nucleus. In terms of biological role, zinc finger nuclear factor involved in transcription by regulating chromatin structure and organization. Involved in the pluripotency and differentiation of embryonic stem cells by regulating SOX2, POU5F1/OCT4, and NANOG. By binding PBX1, prevents the heterodimerization of PBX1 and HOXA9 and their binding to DNA. Regulates neuronal development and neural cell differentiation. The chain is Zinc finger protein 462 from Mus musculus (Mouse).